Reading from the N-terminus, the 895-residue chain is Zinc finger protein 574 (895 aa).

3 C2H2-type zinc fingers span residues 16-38 (YVCS…QNSH), 76-98 (YQCL…QELH), and 126-148 (YECV…RQTH). Phosphoserine is present on Ser164. Residues 214-236 (YKCSECSQLFQLPADFLEHQATH) form a C2H2-type 4 zinc finger. The disordered stretch occupies residues 239-301 (APVPESQEPA…RARRNNSGEA (63 aa)). Residues 247–257 (PALQQEVQASS) are compositionally biased toward polar residues. Residues 274-287 (HSYELRNGEAIGRD) show a composition bias toward basic and acidic residues. Phosphoserine is present on Ser298. C2H2-type zinc fingers lie at residues 309-331 (LFCS…LRSH), 336-358 (FKCP…LGDH), 364-386 (FLCV…RRAH), and 392-413 (HSCP…RRTH). The segment at 434–460 (FPEPAPAETGEPEAPEPPVSEETSAGP) is disordered. 6 C2H2-type zinc fingers span residues 466–489 (YRCL…RFVH), 495–517 (HKCS…LRTH), 523–545 (FPCP…RLTH), 551–573 (YRCG…RLVH), 579–601 (YRCQ…RYHH), and 607–630 (YKCR…LVVH). Residues 636 to 659 (HRCPSCGAAFPSSLRLREHRCAAA) form a C2H2-type 15; degenerate zinc finger. Residues 667 to 689 (FECGTCGKKVGSAARLQAHEAAH) form a C2H2-type 16 zinc finger. Residues 687–732 (AAHAAAGPGEVLAKEPPAPRAPRATRAPVASPAALGGTATASPAPA) are disordered. The span at 707–731 (APRATRAPVASPAALGGTATASPAP) shows a compositional bias: low complexity. Ser717 bears the Phosphoserine mark. At Thr724 the chain carries Phosphothreonine. Position 728 is a phosphoserine (Ser728). C2H2-type zinc fingers lie at residues 737 to 759 (LECS…RRIH), 765 to 787 (YPCP…RRLH), 793 to 815 (FACE…RRIH), and 821 to 843 (YSCP…RKTH). An Asymmetric dimethylarginine modification is found at Arg831.

Belongs to the krueppel C2H2-type zinc-finger protein family.

It localises to the nucleus. In terms of biological role, may be involved in transcriptional regulation. This chain is Zinc finger protein 574 (ZNF574), found in Pongo abelii (Sumatran orangutan).